The primary structure comprises 475 residues: F-box/kelch-repeat protein At1g22040 (475 aa).

Residues 1 to 28 (MGSVMSLSCSKRKATSQDVECSSESRKR) form a disordered region. An F-box domain is found at 41-87 (CRLIPSLPDELSIQILARLPRICYSSVRLVSRRWRSAVSTSEVYSLR). Kelch repeat units lie at residues 94–140 (EEWL…KSLS), 182–228 (GLYV…VLNK), 229–279 (KLYV…AFLA), 306–350 (PFFV…VDGE), and 352–401 (YAFD…GFHG).

This is F-box/kelch-repeat protein At1g22040 from Arabidopsis thaliana (Mouse-ear cress).